We begin with the raw amino-acid sequence, 217 residues long: Ribonuclease HII (217 aa).

The RNase H type-2 domain maps to S27–C216. A divalent metal cation-binding residues include D33, E34, and D126.

This sequence belongs to the RNase HII family. Mn(2+) is required as a cofactor. Requires Mg(2+) as cofactor.

It localises to the cytoplasm. It carries out the reaction Endonucleolytic cleavage to 5'-phosphomonoester.. Its function is as follows. Endonuclease that specifically degrades the RNA of RNA-DNA hybrids. The chain is Ribonuclease HII from Chlamydia trachomatis serovar A (strain ATCC VR-571B / DSM 19440 / HAR-13).